Consider the following 263-residue polypeptide: UPF0739 protein C1orf74 homolog (263 aa).

Belongs to the UPF0739 family.

The chain is UPF0739 protein C1orf74 homolog from Mus musculus (Mouse).